Consider the following 499-residue polypeptide: 2-isopropylmalate synthase (499 aa).

A Pyruvate carboxyltransferase domain is found at 5–267; that stretch reads IKIFDTTLRD…ETGINLGEIA (263 aa). Mn(2+)-binding residues include D14, H202, H204, and N238. The segment at 391-499 is regulatory domain; it reads SVEVLHVISG…YLSALNRIRR (109 aa).

The protein belongs to the alpha-IPM synthase/homocitrate synthase family. LeuA type 1 subfamily. Requires Mn(2+) as cofactor.

The protein resides in the cytoplasm. The catalysed reaction is 3-methyl-2-oxobutanoate + acetyl-CoA + H2O = (2S)-2-isopropylmalate + CoA + H(+). Its pathway is amino-acid biosynthesis; L-leucine biosynthesis; L-leucine from 3-methyl-2-oxobutanoate: step 1/4. Its function is as follows. Catalyzes the condensation of the acetyl group of acetyl-CoA with 3-methyl-2-oxobutanoate (2-ketoisovalerate) to form 3-carboxy-3-hydroxy-4-methylpentanoate (2-isopropylmalate). The polypeptide is 2-isopropylmalate synthase (Pyrococcus furiosus (strain ATCC 43587 / DSM 3638 / JCM 8422 / Vc1)).